Consider the following 101-residue polypeptide: RNA-binding protein Hfq (101 aa).

Residues 9–68 form the Sm domain; it reads DPFLNALRRERVPVSIYLVNGIKLQGQVESFDQFVILLKNTVSQMVYKHAISTVVPSRPV. Positions 63–101 are disordered; sequence VPSRPVSHHSNNPSGSTNNYHGSNPSAPQQPQQDSDDAE. Residues 70–86 show a composition bias toward polar residues; sequence HHSNNPSGSTNNYHGSN.

This sequence belongs to the Hfq family. In terms of assembly, homohexamer.

In terms of biological role, RNA chaperone that binds small regulatory RNA (sRNAs) and mRNAs to facilitate mRNA translational regulation in response to envelope stress, environmental stress and changes in metabolite concentrations. Also binds with high specificity to tRNAs. Positively regulates the expression of the yst gene for heat-stable enterotoxin (Y-ST). In Yersinia enterocolitica, this protein is RNA-binding protein Hfq.